The chain runs to 331 residues: Endo-1,4-beta-xylanase 2 (331 aa).

The N-terminal stretch at 1 to 17 (MKASSVLLGLAPLAALA) is a signal peptide. Residues 31–329 (QQSIDALMKA…KPAYNSVVQA (299 aa)) enclose the GH10 domain. The N-linked (GlcNAc...) asparagine glycan is linked to Asn105. The Proton donor role is filled by Glu159. Residue Glu266 is the Nucleophile of the active site. An intrachain disulfide couples Cys284 to Cys290. Asn301 is a glycosylation site (N-linked (GlcNAc...) asparagine).

This sequence belongs to the glycosyl hydrolase 10 (cellulase F) family.

It is found in the secreted. It catalyses the reaction Endohydrolysis of (1-&gt;4)-beta-D-xylosidic linkages in xylans.. It functions in the pathway glycan degradation; xylan degradation. Functionally, endo-1,4-beta-xylanase involved in the hydrolysis of xylan, a major structural heterogeneous polysaccharide found in plant biomass representing the second most abundant polysaccharide in the biosphere, after cellulose. Accounts for approximately 70 percent of the endoxylanase activity in the culture filtrate. The protein is Endo-1,4-beta-xylanase 2 (XYL2) of Pyricularia grisea (Crabgrass-specific blast fungus).